The primary structure comprises 1005 residues: Mitogen-activated protein kinase kinase kinase 10 (1005 aa).

One can recognise an SH3 domain in the interval 32 to 96 (VSNPLWMAVF…PSNYVVSDDK (65 aa)). Residues 118-380 (LNLDEIIGVG…SCILEQLTTI (263 aa)) form the Protein kinase domain. Residues 124–132 (IGVGGFGKV) and Lys145 contribute to the ATP site. Asp242 functions as the Proton acceptor in the catalytic mechanism. 2 leucine-zipper regions span residues 404–425 (IQQM…EEEL) and 439–460 (LKRR…ELNI). Disordered regions lie at residues 551 to 611 (SVLK…KHTP), 647 to 676 (QSDH…QSRR), 712 to 736 (FQWA…GEDS), and 758 to 940 (RSLI…AEGA). Basic and acidic residues-rich tracts occupy residues 576 to 588 (QKER…RLKT) and 648 to 658 (SDHRSHPEDTA). 2 stretches are compositionally biased toward basic and acidic residues: residues 761–786 (IRSD…EDRG) and 799–809 (YKVESFKRDPK). Positions 810–826 (QSLTPTHVTVGRNNTTE) are enriched in polar residues. The segment covering 862 to 879 (EPSPFPRLPDPHFVFPPP) has biased composition (pro residues). A compositionally biased stretch (low complexity) spans 915-940 (SLSQTHSSSPSSGGGDACSSGSAEGA).

Belongs to the protein kinase superfamily. STE Ser/Thr protein kinase family. MAP kinase kinase kinase subfamily. Homodimer. Binds to the GTPase rac1 but not cdc42 or rhoA. Interacts (via kinase domain) with pak1 (via kinase domain). Interacts with the ubiquitin-conjugating enzyme ube2d4. It depends on Mg(2+) as a cofactor. In terms of processing, autophosphorylation on serine and threonine residues within the activation loop plays a role in enzyme activation. Mono- and poly-ubiquitinated. As to expression, in adults, strongly expressed in the brain and spleen with lower levels in pancreas, heart, muscle and kidney (at protein level). In the developing embryo, expressed at stage 22 in the cement gland. Weakly expressed in the pronephros from stage 24 or 25, with expression increasing in strength by stage 30 and continuing at least until stage 37. Expression in the developing pronephros correlates with epithelialization of the proximal pronephric tubules.

The catalysed reaction is L-seryl-[protein] + ATP = O-phospho-L-seryl-[protein] + ADP + H(+). It catalyses the reaction L-threonyl-[protein] + ATP = O-phospho-L-threonyl-[protein] + ADP + H(+). With respect to regulation, homodimerization via the leucine zipper domains is required for autophosphorylation and subsequent activation. Activates the JUN N-terminal pathway. Essential for pronephros and cement gland development. The chain is Mitogen-activated protein kinase kinase kinase 10 (map3k10) from Xenopus laevis (African clawed frog).